A 517-amino-acid polypeptide reads, in one-letter code: PSTB2-interacting protein 1 (517 aa).

Interacts with PDR17/PSTB2 and SCS2.

Its function is as follows. Phosphatidic acid-binding protein involved in interorganelle phosphatidylserine (PtdSer) transport. Linkks a PtdSer donor membrane (via binding of SCS2 and phosphatidic acid present in the donor membrane) with an acceptor membrane (via its interaction with PDR17), forming a zone of apposition that facilitates PtdSer transfer. The protein is PSTB2-interacting protein 1 of Saccharomyces cerevisiae (strain ATCC 204508 / S288c) (Baker's yeast).